We begin with the raw amino-acid sequence, 140 residues long: UPF0132 membrane protein MJ1527 (140 aa).

The next 3 membrane-spanning stretches (helical) occupy residues 40–60 (MEGV…LLLE), 70–90 (AMQS…VSAI), and 92–112 (IIGW…WIVG).

It belongs to the UPF0132 family.

Its subcellular location is the cell membrane. This is UPF0132 membrane protein MJ1527 from Methanocaldococcus jannaschii (strain ATCC 43067 / DSM 2661 / JAL-1 / JCM 10045 / NBRC 100440) (Methanococcus jannaschii).